The sequence spans 313 residues: Malate dehydrogenase (313 aa).

11 to 16 lines the NAD(+) pocket; sequence GAGHTG. Substrate is bound by residues Arg-86 and Arg-92. Residues Asn-99 and 122–124 contribute to the NAD(+) site; that span reads LTN. Residues Asn-124 and Arg-155 each contribute to the substrate site. The active-site Proton acceptor is His-179.

The protein belongs to the LDH/MDH superfamily. MDH type 3 family.

It catalyses the reaction (S)-malate + NAD(+) = oxaloacetate + NADH + H(+). Functionally, catalyzes the reversible oxidation of malate to oxaloacetate. This chain is Malate dehydrogenase, found in Staphylococcus epidermidis (strain ATCC 35984 / DSM 28319 / BCRC 17069 / CCUG 31568 / BM 3577 / RP62A).